We begin with the raw amino-acid sequence, 128 residues long: Probable 4-amino-4-deoxy-L-arabinose-phosphoundecaprenol flippase subunit ArnF (128 aa).

At 1-2 (MG) the chain is on the cytoplasmic side. The chain crosses the membrane as a helical span at residues 3–23 (LIWGLFSVIIASVAQLSLGFA). Over 24 to 35 (ASHLPPMTHLWD) the chain is Periplasmic. The helical transmembrane segment at 36-56 (FIAALLAFGLDARILLLGLLG) threads the bilayer. Over 57–76 (YLLSVFCWYKTLHKLALSKA) the chain is Cytoplasmic. Residues 77–97 (YALLSMSYVLVWIASMVLPGW) form a helical membrane-spanning segment. At 98–100 (EGT) the chain is on the periplasmic side. The chain crosses the membrane as a helical span at residues 101–121 (FSLKALLGVACIMSGLMLIFL). The Cytoplasmic portion of the chain corresponds to 122–128 (PMTKQRY).

Belongs to the ArnF family. In terms of assembly, heterodimer of ArnE and ArnF.

Its subcellular location is the cell inner membrane. It participates in bacterial outer membrane biogenesis; lipopolysaccharide biosynthesis. Translocates 4-amino-4-deoxy-L-arabinose-phosphoundecaprenol (alpha-L-Ara4N-phosphoundecaprenol) from the cytoplasmic to the periplasmic side of the inner membrane. The polypeptide is Probable 4-amino-4-deoxy-L-arabinose-phosphoundecaprenol flippase subunit ArnF (Escherichia coli O9:H4 (strain HS)).